The following is a 165-amino-acid chain: Phosphopantetheine adenylyltransferase (165 aa).

Residue Thr9 participates in substrate binding. ATP is bound by residues 9–10 and His17; that span reads TF. The substrate site is built by Lys41, Leu73, and Arg87. ATP is bound by residues 88–90, Glu98, and 123–129; these read GLR and YQFISGT.

This sequence belongs to the bacterial CoaD family. In terms of assembly, homohexamer. Mg(2+) is required as a cofactor.

It is found in the cytoplasm. The catalysed reaction is (R)-4'-phosphopantetheine + ATP + H(+) = 3'-dephospho-CoA + diphosphate. The protein operates within cofactor biosynthesis; coenzyme A biosynthesis; CoA from (R)-pantothenate: step 4/5. In terms of biological role, reversibly transfers an adenylyl group from ATP to 4'-phosphopantetheine, yielding dephospho-CoA (dPCoA) and pyrophosphate. This is Phosphopantetheine adenylyltransferase from Burkholderia lata (strain ATCC 17760 / DSM 23089 / LMG 22485 / NCIMB 9086 / R18194 / 383).